Here is a 194-residue protein sequence, read N- to C-terminus: ATP-dependent Clp protease proteolytic subunit (194 aa).

The active-site Nucleophile is the S98. The active site involves H123.

The protein belongs to the peptidase S14 family. Fourteen ClpP subunits assemble into 2 heptameric rings which stack back to back to give a disk-like structure with a central cavity, resembling the structure of eukaryotic proteasomes.

It localises to the cytoplasm. The catalysed reaction is Hydrolysis of proteins to small peptides in the presence of ATP and magnesium. alpha-casein is the usual test substrate. In the absence of ATP, only oligopeptides shorter than five residues are hydrolyzed (such as succinyl-Leu-Tyr-|-NHMec, and Leu-Tyr-Leu-|-Tyr-Trp, in which cleavage of the -Tyr-|-Leu- and -Tyr-|-Trp bonds also occurs).. Its function is as follows. Cleaves peptides in various proteins in a process that requires ATP hydrolysis. Has a chymotrypsin-like activity. Plays a major role in the degradation of misfolded proteins. In Wigglesworthia glossinidia brevipalpis, this protein is ATP-dependent Clp protease proteolytic subunit.